Here is a 265-residue protein sequence, read N- to C-terminus: MRVTVFHNSIPASITAAQKLTKLLKSGHFELDERHPEVVVTIGGDGTLLSAFHRYADQLNSIRFIGVHTGHLGFYTDWRDFEIEDLVIALKEDSGQSVSYPLLDVQATYADATSAHYLALNESTLKRLNGTMRTEVYIKGDFFESFRGDGLCVSTPTGSTAYSKSNGGAVIHPRLDALQMTEIASINNRVFRTLSSPIITAPDEWVTLEPTGRDDYVMTVDQFVINPPTIKQIRYKIAKERIHFARYRHMHFWDRVEDAFIGAKH.

Catalysis depends on Asp-45, which acts as the Proton acceptor. Residues 45-46 (DG), 121-122 (NE), Arg-147, Asp-149, 160-165 (TAYSKS), Ala-184, and Gln-222 each bind NAD(+).

Belongs to the NAD kinase family. The cofactor is a divalent metal cation.

It localises to the cytoplasm. The catalysed reaction is NAD(+) + ATP = ADP + NADP(+) + H(+). Its function is as follows. Involved in the regulation of the intracellular balance of NAD and NADP, and is a key enzyme in the biosynthesis of NADP. Catalyzes specifically the phosphorylation on 2'-hydroxyl of the adenosine moiety of NAD to yield NADP. The sequence is that of NAD kinase from Lacticaseibacillus paracasei (strain ATCC 334 / BCRC 17002 / CCUG 31169 / CIP 107868 / KCTC 3260 / NRRL B-441) (Lactobacillus paracasei).